The following is a 339-amino-acid chain: Anthranilate phosphoribosyltransferase (339 aa).

Residues G80, 83–84 (GD), T88, 90–93 (NIST), 108–116 (KHGNRSVSS), and S120 contribute to the 5-phospho-alpha-D-ribose 1-diphosphate site. An anthranilate-binding site is contributed by G80. S92 is a binding site for Mg(2+). Anthranilate is bound at residue N111. An anthranilate-binding site is contributed by R166. Positions 225 and 226 each coordinate Mg(2+).

This sequence belongs to the anthranilate phosphoribosyltransferase family. As to quaternary structure, homodimer. Mg(2+) serves as cofactor.

It catalyses the reaction N-(5-phospho-beta-D-ribosyl)anthranilate + diphosphate = 5-phospho-alpha-D-ribose 1-diphosphate + anthranilate. The protein operates within amino-acid biosynthesis; L-tryptophan biosynthesis; L-tryptophan from chorismate: step 2/5. In terms of biological role, catalyzes the transfer of the phosphoribosyl group of 5-phosphorylribose-1-pyrophosphate (PRPP) to anthranilate to yield N-(5'-phosphoribosyl)-anthranilate (PRA). The protein is Anthranilate phosphoribosyltransferase of Moorella thermoacetica (strain ATCC 39073 / JCM 9320).